Here is a 280-residue protein sequence, read N- to C-terminus: 2-dehydro-3-deoxyphosphooctonate aldolase (280 aa).

Belongs to the KdsA family.

The protein resides in the cytoplasm. The catalysed reaction is D-arabinose 5-phosphate + phosphoenolpyruvate + H2O = 3-deoxy-alpha-D-manno-2-octulosonate-8-phosphate + phosphate. The protein operates within carbohydrate biosynthesis; 3-deoxy-D-manno-octulosonate biosynthesis; 3-deoxy-D-manno-octulosonate from D-ribulose 5-phosphate: step 2/3. It functions in the pathway bacterial outer membrane biogenesis; lipopolysaccharide biosynthesis. The protein is 2-dehydro-3-deoxyphosphooctonate aldolase of Neisseria gonorrhoeae (strain NCCP11945).